A 519-amino-acid polypeptide reads, in one-letter code: Bifunctional pantoate ligase/cytidylate kinase (519 aa).

Positions 1 to 282 (MNLTILRTKT…CGNTRLIDHG (282 aa)) are pantoate--beta-alanine ligase. 30–37 (MGGLHQGH) contributes to the ATP binding site. H37 serves as the catalytic Proton donor. Position 66 (Q66) interacts with (R)-pantoate. Q66 contacts beta-alanine. 155–158 (GEKD) lines the ATP pocket. Q161 is a binding site for (R)-pantoate. 192–195 (CSSR) serves as a coordination point for ATP. The segment at 283–519 (FLMKRNPIVA…PQEVWPTNAT (237 aa)) is cytidylate kinase.

The protein in the N-terminal section; belongs to the pantothenate synthetase family. It in the C-terminal section; belongs to the cytidylate kinase family. Type 1 subfamily.

Its subcellular location is the cytoplasm. It carries out the reaction (R)-pantoate + beta-alanine + ATP = (R)-pantothenate + AMP + diphosphate + H(+). The catalysed reaction is CMP + ATP = CDP + ADP. The enzyme catalyses dCMP + ATP = dCDP + ADP. Its pathway is cofactor biosynthesis; (R)-pantothenate biosynthesis; (R)-pantothenate from (R)-pantoate and beta-alanine: step 1/1. In terms of biological role, catalyzes the condensation of pantoate with beta-alanine in an ATP-dependent reaction via a pantoyl-adenylate intermediate. Its function is as follows. Catalyzes the transfer of a phosphate group from ATP to either CMP or dCMP to form CDP or dCDP and ADP, respectively. The chain is Bifunctional pantoate ligase/cytidylate kinase from Prochlorococcus marinus (strain SARG / CCMP1375 / SS120).